The following is a 335-amino-acid chain: Basic endochitinase B (335 aa).

Positions 1 to 33 (MPPQKENHRTLNKMKTNLFLFLIFSLLLSLSSA) are cleaved as a signal peptide. Residues 34 to 75 (EQCGRQAGGALCPNGLCCSEFGWCGNTEPYCKQPGCQSQCTP) form the Chitin-binding type-1 domain. Disulfide bonds link Cys-36-Cys-51, Cys-45-Cys-57, Cys-50-Cys-64, Cys-69-Cys-73, Cys-107-Cys-169, Cys-181-Cys-189, and Cys-288-Cys-320. The Proton donor role is filled by Glu-151. Residues 329–335 (GLLEAAI) constitute a propeptide, removed in mature form. Positions 329-335 (GLLEAAI) match the Vacuolar targeting signal motif.

This sequence belongs to the glycosyl hydrolase 19 family. Chitinase class I subfamily. In terms of tissue distribution, high constitutive level in roots with lower levels in leaves and flowering shoots.

Its subcellular location is the vacuole. The enzyme catalyses Random endo-hydrolysis of N-acetyl-beta-D-glucosaminide (1-&gt;4)-beta-linkages in chitin and chitodextrins.. Its function is as follows. Defense against chitin-containing fungal pathogens. Seems particularly implicated in resistance to jasmonate-inducing pathogens such as A.brassicicola. In vitro antifungal activity against T.reesei, but not against A.solani, F.oxysporum, S.sclerotiorum, G.graminis and P.megasperma. The protein is Basic endochitinase B (CHI-B) of Arabidopsis thaliana (Mouse-ear cress).